Consider the following 123-residue polypeptide: Large ribosomal subunit protein uL14 (123 aa).

The protein belongs to the universal ribosomal protein uL14 family. As to quaternary structure, part of the 50S ribosomal subunit. Forms a cluster with proteins L3 and L19. In the 70S ribosome, L14 and L19 interact and together make contacts with the 16S rRNA in bridges B5 and B8.

Binds to 23S rRNA. Forms part of two intersubunit bridges in the 70S ribosome. The chain is Large ribosomal subunit protein uL14 from Sodalis glossinidius (strain morsitans).